Reading from the N-terminus, the 199-residue chain is VAMP-like protein YKT62 (199 aa).

The Longin domain maps to 7 to 131 (LVLKCDPETR…PYLKEASDKF (125 aa)). One can recognise a v-SNARE coiled-coil homology domain in the interval 139–199 (KLLKIQRELD…KKTNSCCTLL (61 aa)). A lipid anchor (S-palmitoyl cysteine) is attached at Cys-195. Cys-196 is modified (cysteine methyl ester). Cys-196 is lipidated: S-geranylgeranyl cysteine. A propeptide spans 197–199 (TLL) (removed in mature form).

It belongs to the synaptobrevin family. Interacts with SYP41. Core constituent of the SNARE complex required for membrane fusion at the trans-Golgi network.

Its subcellular location is the cell membrane. Its function is as follows. Involved in the secretory pathway. Essential for membrane fusion mediated by either SYP41 or SYP61; triggers the fusion of phospholipid vesicles containing SYP41 or SYP61 and VTI12. This Arabidopsis thaliana (Mouse-ear cress) protein is VAMP-like protein YKT62.